The chain runs to 264 residues: Undecaprenyl-diphosphatase (264 aa).

8 consecutive transmembrane segments (helical) span residues 7-27 (VVIL…SSGH), 39-59 (LPIV…MIYY), 89-109 (ILLI…IEMF), 112-132 (LFTL…LFLL), 145-165 (ILLA…PGIS), 182-202 (SESF…SLLL), 212-232 (MLFS…VGLF), and 244-264 (SKLY…YFLF).

This sequence belongs to the UppP family.

It is found in the cell inner membrane. The catalysed reaction is di-trans,octa-cis-undecaprenyl diphosphate + H2O = di-trans,octa-cis-undecaprenyl phosphate + phosphate + H(+). In terms of biological role, catalyzes the dephosphorylation of undecaprenyl diphosphate (UPP). Confers resistance to bacitracin. This chain is Undecaprenyl-diphosphatase, found in Borrelia hermsii (strain HS1 / DAH).